A 569-amino-acid polypeptide reads, in one-letter code: Cationic amino acid transporter 5 (569 aa).

Over 1–67 (MEGEERGYWR…KQSEHEMKRC (67 aa)) the chain is Cytoplasmic. A helical membrane pass occupies residues 68–88 (LTWWDLVWFGFGSVIGAGIFV). The Extracellular segment spans residues 89 to 97 (LTGQEAHEQ). The chain crosses the membrane as a helical span at residues 98–118 (AGPAIVLSYVVSGLSAMLSVF). Residues 119–143 (CYTEFAVEIPVAGGSFAYLRIELGD) are Cytoplasmic-facing. A helical membrane pass occupies residues 144–164 (FAAFITAGNILLESIVGTAAV). The Extracellular segment spans residues 165–192 (ARAWTSYFATLLNRSPNALRIKTDLSSG). Residues 193–213 (FNLLDPIAVVVIAASATIASI) traverse the membrane as a helical segment. Residues 214–222 (STRKTSLLN) lie on the Cytoplasmic side of the membrane. A helical membrane pass occupies residues 223-243 (WIASAINTLVIFFVIIAGFIH). Residues 244–251 (ADTSNLTP) are Extracellular-facing. Residues 252–272 (FLPFGPEGVFRAAAVVYFAYG) traverse the membrane as a helical segment. The Cytoplasmic segment spans residues 273–290 (GFDSIATMAEETKNPSRD). Residues 291–311 (IPIGLLGSMSIITVIYCLMAL) form a helical membrane-spanning segment. Residues 312-341 (SLSMMQKYTDIDPNAAYSVAFQSVGMKWGK) are Extracellular-facing. Residues 342-362 (YLVALGALKGMTTVLLVGALG) form a helical membrane-spanning segment. Residues 363–389 (QARYVTHIARTHMIPPIFALVHPKTGT) are Cytoplasmic-facing. Residues 390 to 410 (PINANLLVAIPSALIAFFSGL) traverse the membrane as a helical segment. A topological domain (extracellular) is located at residue D411. The helical transmembrane segment at 412–432 (VLASLLSISTLFIFTMMPIAL) threads the bilayer. Residues 433–450 (LVRRYYVRQDTPRVHLIK) are Cytoplasmic-facing. The helical transmembrane segment at 451-471 (LITCLLFVVVSSMGTSAYWGM) threads the bilayer. The Extracellular segment spans residues 472–477 (QRKGSW). Residues 478-498 (IGYTVTVPFWFLGTLGIVFFV) traverse the membrane as a helical segment. Residues 499–505 (PQQRTPK) lie on the Cytoplasmic side of the membrane. Residues 506 to 526 (VWGVPLVPWLPCLSIATNIFL) form a helical membrane-spanning segment. The Extracellular portion of the chain corresponds to 527–537 (MGSLGAMAFVR). A helical transmembrane segment spans residues 538 to 558 (FGVCTLAMLLYYFLLGLHATF). Residues 559–569 (DMAHQQIVPRT) lie on the Cytoplasmic side of the membrane.

Belongs to the amino acid-polyamine-organocation (APC) superfamily. Cationic amino acid transporter (CAT) (TC 2.A.3.3) family. Expressed in roots, stems, flowers, seeds, and leaves. Mostly present in leaf rims and cotyledons of developing seedlings.

The protein resides in the cell membrane. High-affinity permease involved in the transport of the cationic amino acids (e.g. arginine, and, to a lower extent, citrulline and glutamate). Transport mostly basic amino acids, and, to a lower extent neutral and acidic amino acids. The polypeptide is Cationic amino acid transporter 5 (CAT5) (Arabidopsis thaliana (Mouse-ear cress)).